Reading from the N-terminus, the 360-residue chain is Phospho-N-acetylmuramoyl-pentapeptide-transferase (360 aa).

10 helical membrane-spanning segments follow: residues 25–45 (RGIL…PWMI), 73–93 (TMGG…WADL), 97–117 (YVWV…VDDY), 132–152 (WKYF…YMTA), 168–188 (VSIP…VGSS), 199–219 (GLAI…CYLS), 236–256 (AGEL…FLWF), 263–283 (VFMG…IAVI), 288–308 (VVLF…IIQV), and 338–358 (VIVR…ATLK).

This sequence belongs to the glycosyltransferase 4 family. MraY subfamily. Requires Mg(2+) as cofactor.

It localises to the cell inner membrane. The enzyme catalyses UDP-N-acetyl-alpha-D-muramoyl-L-alanyl-gamma-D-glutamyl-meso-2,6-diaminopimeloyl-D-alanyl-D-alanine + di-trans,octa-cis-undecaprenyl phosphate = di-trans,octa-cis-undecaprenyl diphospho-N-acetyl-alpha-D-muramoyl-L-alanyl-D-glutamyl-meso-2,6-diaminopimeloyl-D-alanyl-D-alanine + UMP. It participates in cell wall biogenesis; peptidoglycan biosynthesis. Functionally, catalyzes the initial step of the lipid cycle reactions in the biosynthesis of the cell wall peptidoglycan: transfers peptidoglycan precursor phospho-MurNAc-pentapeptide from UDP-MurNAc-pentapeptide onto the lipid carrier undecaprenyl phosphate, yielding undecaprenyl-pyrophosphoryl-MurNAc-pentapeptide, known as lipid I. This Ectopseudomonas mendocina (strain ymp) (Pseudomonas mendocina) protein is Phospho-N-acetylmuramoyl-pentapeptide-transferase.